We begin with the raw amino-acid sequence, 270 residues long: Palmitoyltransferase ZDHHC12-A (270 aa).

Residues 1 to 8 lie on the Cytoplasmic side of the membrane; it reads MNKSLFKS. The chain crosses the membrane as a helical span at residues 9–29; the sequence is GCLVRTAHVILTWIITLILFL. Residues 30–45 are Lumenal-facing; the sequence is HNTDLRRCQERGDLLQ. Residues 46–66 traverse the membrane as a helical segment; sequence PLVFSSVLLLSVLLYFTVSLM. The Cytoplasmic portion of the chain corresponds to 67–145; the sequence is DPGFVLSDSQ…DNCVGELNHR (79 aa). Residues 102-152 enclose the DHHC domain; the sequence is RRCGYCFLLQPMRARHCKWCKRCVRRFDHHCPWIDNCVGELNHRWFLLYLC. Cysteine 132 acts as the S-palmitoyl cysteine intermediate in catalysis. The helical transmembrane segment at 146 to 166 threads the bilayer; the sequence is WFLLYLCVQFTAVCWGLQSAW. At 167-182 the chain is on the lumenal side; it reads SGFISAPSWQQWFTQN. Residues 183–203 traverse the membrane as a helical segment; the sequence is VFLLVAFAVTAVFSVVLLLLL. Over 204-270 the chain is Cytoplasmic; sequence CIHAYLASVN…MYIRHNNASV (67 aa).

This sequence belongs to the DHHC palmitoyltransferase family.

It localises to the golgi apparatus membrane. The protein resides in the endoplasmic reticulum membrane. The enzyme catalyses L-cysteinyl-[protein] + hexadecanoyl-CoA = S-hexadecanoyl-L-cysteinyl-[protein] + CoA. In terms of biological role, palmitoyltransferase that catalyzes the addition of palmitate onto various protein substrates. Has a palmitoyltransferase activity toward gephyrin/GPHN, regulating its clustering at synapses and its function in gamma-aminobutyric acid receptor clustering. Acts as an inhibitor of the NLRP3 inflammasome by mediating palmitoylation of NLRP3, thereby promoting NLRP3 degradation by the chaperone-mediated autophagy (CMA) process. The sequence is that of Palmitoyltransferase ZDHHC12-A from Danio rerio (Zebrafish).